A 650-amino-acid chain; its full sequence is Phosphomethylpyrimidine synthase (650 aa).

Substrate-binding positions include Asn-241, Met-270, Tyr-299, His-335, 355-357, 396-399, and Glu-435; these read SRG and DGLR. His-439 provides a ligand contact to Zn(2+). A substrate-binding site is contributed by Tyr-462. His-503 contributes to the Zn(2+) binding site. Residues Cys-583, Cys-586, and Cys-591 each contribute to the [4Fe-4S] cluster site.

It belongs to the ThiC family. Homodimer. [4Fe-4S] cluster serves as cofactor.

It catalyses the reaction 5-amino-1-(5-phospho-beta-D-ribosyl)imidazole + S-adenosyl-L-methionine = 4-amino-2-methyl-5-(phosphooxymethyl)pyrimidine + CO + 5'-deoxyadenosine + formate + L-methionine + 3 H(+). The protein operates within cofactor biosynthesis; thiamine diphosphate biosynthesis. In terms of biological role, catalyzes the synthesis of the hydroxymethylpyrimidine phosphate (HMP-P) moiety of thiamine from aminoimidazole ribotide (AIR) in a radical S-adenosyl-L-methionine (SAM)-dependent reaction. This is Phosphomethylpyrimidine synthase from Pseudoalteromonas translucida (strain TAC 125).